Consider the following 493-residue polypeptide: UPF0699 transmembrane protein YdbT (493 aa).

6 helical membrane-spanning segments follow: residues 18–38, 46–66, 188–208, 232–252, 370–390, and 393–413; these read CHTI…VYIV, FYGA…SIIK, LMAA…FALI, IGIY…FSIA, VIFS…WGYL, and ILLP…AWTI.

The protein belongs to the UPF0699 family.

Its subcellular location is the cell membrane. In Bacillus subtilis (strain 168), this protein is UPF0699 transmembrane protein YdbT (ydbT).